The following is a 177-amino-acid chain: Thioredoxin M-type, chloroplastic (177 aa).

The N-terminal 64 residues, 1–64 (MAAFTCTSSP…SRLRRGGIIC (64 aa)), are a transit peptide targeting the chloroplast. A Thioredoxin domain is found at 65–177 (EAQDTATGIP…LATSIDKFLQ (113 aa)). Active-site nucleophile residues include Cys101 and Cys104. A disulfide bridge connects residues Cys101 and Cys104.

Belongs to the thioredoxin family. Plant M-type subfamily. Forms a complex with heterodimeric ferredoxin-thioredoxin reductase (FTR) and ferredoxin.

The protein resides in the plastid. It localises to the chloroplast. Its function is as follows. Participates in various redox reactions through the reversible oxidation of the active center dithiol to a disulfide. The M form is known to activate NADP-malate dehydrogenase. In Brassica napus (Rape), this protein is Thioredoxin M-type, chloroplastic.